The following is a 505-amino-acid chain: 6-phosphofructo-2-kinase/fructose-2,6-bisphosphatase 2 (505 aa).

Residues 1-20 (MSGASSSEQNNNSYETKTPN) form a disordered region. An N-acetylserine modification is found at S2. Positions 2–248 (SGASSSEQNN…VYYLMNIHVQ (247 aa)) are 6-phosphofructo-2-kinase. A Phosphoserine; by PKA modification is found at S29. Residue 45 to 53 (GLPARGKTY) coordinates ATP. Beta-D-fructose 6-phosphate-binding residues include R78 and R102. The active site involves D128. The beta-D-fructose 6-phosphate site is built by T130 and R136. C158 is an active-site residue. 167–172 (NILEVK) is an ATP binding site. Beta-D-fructose 6-phosphate-binding residues include K172, R193, and Y197. A fructose-2,6-bisphosphatase region spans residues 249–505 (PRTIYLCRHG…RAQDMQEGAD (257 aa)). R256 lines the beta-D-fructose 2,6-bisphosphate pocket. The active-site Tele-phosphohistidine intermediate is the H257. Beta-D-fructose 2,6-bisphosphate-binding residues include N263 and G269. E326 serves as the catalytic Proton donor/acceptor. Beta-D-fructose 2,6-bisphosphate contacts are provided by Y337, R351, K355, Y366, Q392, and R396. An ATP-binding site is contributed by 348-351 (FALR). ATP-binding positions include 392-396 (QAVMR) and Y428. A disordered region spans residues 445 to 505 (HRDKPTNNFP…RAQDMQEGAD (61 aa)). Positions 450-476 (TNNFPKNQTPVRMRRNSFTPLSSSNTI) are enriched in polar residues. A Phosphoserine; by AMPK modification is found at S466. Phosphothreonine is present on residues T468 and T475. Position 483 is a phosphoserine; by BRAF (S483). Phosphoserine occurs at positions 486 and 493.

The protein in the C-terminal section; belongs to the phosphoglycerate mutase family. As to quaternary structure, homodimer. Forms a heterodimer with PFKFB3. Post-translationally, phosphorylation by AMPK stimulates activity. As to expression, heart.

The catalysed reaction is beta-D-fructose 2,6-bisphosphate + H2O = beta-D-fructose 6-phosphate + phosphate. The enzyme catalyses beta-D-fructose 6-phosphate + ATP = beta-D-fructose 2,6-bisphosphate + ADP + H(+). Phosphorylation results in the activation of the kinase activity. Synthesis and degradation of fructose 2,6-bisphosphate. This is 6-phosphofructo-2-kinase/fructose-2,6-bisphosphatase 2 from Homo sapiens (Human).